A 241-amino-acid polypeptide reads, in one-letter code: Class B acid phosphatase (241 aa).

The first 27 residues, 1–27 (MFITTKKSLIALVLATAGLISSPVSFA), serve as a signal peptide directing secretion. Asp-72 serves as the catalytic Nucleophile. Mg(2+) is bound by residues Asp-72 and Asp-74. The active-site Proton donor is Asp-74. Residues 141–142 (TG) and Lys-181 contribute to the substrate site. Asp-196 is a binding site for Mg(2+).

The protein belongs to the class B bacterial acid phosphatase family. Homotetramer. Mg(2+) is required as a cofactor.

Its subcellular location is the periplasm. It catalyses the reaction a phosphate monoester + H2O = an alcohol + phosphate. Functionally, dephosphorylates several organic phosphate monoesters. Also has a phosphotransferase activity catalyzing the transfer of low-energy phosphate groups from organic phosphate monoesters to free hydroxyl groups of various organic compounds. The sequence is that of Class B acid phosphatase from Edwardsiella ictaluri (strain 93-146).